A 397-amino-acid chain; its full sequence is 4-hydroxyphenylpyruvate dioxygenase (397 aa).

VOC domains lie at 18-149 and 181-339; these read NFHH…FVEY and FIDH…IFTK. Residues histidine 184, histidine 267, and glutamate 350 each contribute to the Fe cation site.

Belongs to the 4HPPD family. Homodimer. Fe cation is required as a cofactor.

The protein localises to the cytoplasm. Its subcellular location is the endoplasmic reticulum membrane. It localises to the golgi apparatus membrane. It carries out the reaction 3-(4-hydroxyphenyl)pyruvate + O2 = homogentisate + CO2. The protein operates within amino-acid degradation; L-phenylalanine degradation; acetoacetate and fumarate from L-phenylalanine: step 3/6. Catalyzes the conversion of 4-hydroxyphenylpyruvic acid to homogentisic acid, one of the steps in tyrosine catabolism. The chain is 4-hydroxyphenylpyruvate dioxygenase (hpd) from Danio rerio (Zebrafish).